Here is a 187-residue protein sequence, read N- to C-terminus: Undecaprenyl-diphosphatase (187 aa).

Transmembrane regions (helical) follow at residues 13-33 (GLIE…LIIF), 45-65 (KVFE…VYFA), 85-105 (MAVI…HGVI), and 108-128 (VLFN…AILM).

This sequence belongs to the UppP family.

The protein resides in the cell inner membrane. The enzyme catalyses di-trans,octa-cis-undecaprenyl diphosphate + H2O = di-trans,octa-cis-undecaprenyl phosphate + phosphate + H(+). Its function is as follows. Catalyzes the dephosphorylation of undecaprenyl diphosphate (UPP). Confers resistance to bacitracin. This Azospirillum brasilense protein is Undecaprenyl-diphosphatase (uppP).